Consider the following 269-residue polypeptide: Glucosyl-3-phosphoglycerate/mannosyl-3-phosphoglycerate phosphatase (269 aa).

Asp-6 functions as the Nucleophile in the catalytic mechanism. Mg(2+)-binding residues include Asp-6, Asp-8, and Asp-210.

The protein belongs to the HAD-like hydrolase superfamily. MPGP family. Monomer. Co(2+) serves as cofactor. Requires Mg(2+) as cofactor.

The catalysed reaction is (2R)-2-O-(alpha-D-glucopyranosyl)-3-phospho-glycerate + H2O = (2R)-2-O-(alpha-D-glucopyranosyl)-glycerate + phosphate. The enzyme catalyses 2-O-(alpha-D-mannosyl)-3-phosphoglycerate + H2O = (2R)-2-O-(alpha-D-mannosyl)-glycerate + phosphate. Functionally, involved in the biosynthesis of glucosylglycerate. Catalyzes the dephosphorylation of glucosyl-3-phosphoglycerate (GPG) and mannosyl-3-phosphoglycerate (MPG) to glucosylglycerate (GG) and mannosylglycerate (MG), respectively. The polypeptide is Glucosyl-3-phosphoglycerate/mannosyl-3-phosphoglycerate phosphatase (Persephonella marina (strain DSM 14350 / EX-H1)).